We begin with the raw amino-acid sequence, 190 residues long: Crossover junction endodeoxyribonuclease RuvC (190 aa).

Residues Asp-7, Glu-68, and Asp-141 contribute to the active site. 3 residues coordinate Mg(2+): Asp-7, Glu-68, and Asp-141.

It belongs to the RuvC family. As to quaternary structure, homodimer which binds Holliday junction (HJ) DNA. The HJ becomes 2-fold symmetrical on binding to RuvC with unstacked arms; it has a different conformation from HJ DNA in complex with RuvA. In the full resolvosome a probable DNA-RuvA(4)-RuvB(12)-RuvC(2) complex forms which resolves the HJ. Mg(2+) serves as cofactor.

It localises to the cytoplasm. The catalysed reaction is Endonucleolytic cleavage at a junction such as a reciprocal single-stranded crossover between two homologous DNA duplexes (Holliday junction).. The RuvA-RuvB-RuvC complex processes Holliday junction (HJ) DNA during genetic recombination and DNA repair. Endonuclease that resolves HJ intermediates. Cleaves cruciform DNA by making single-stranded nicks across the HJ at symmetrical positions within the homologous arms, yielding a 5'-phosphate and a 3'-hydroxyl group; requires a central core of homology in the junction. The consensus cleavage sequence is 5'-(A/T)TT(C/G)-3'. Cleavage occurs on the 3'-side of the TT dinucleotide at the point of strand exchange. HJ branch migration catalyzed by RuvA-RuvB allows RuvC to scan DNA until it finds its consensus sequence, where it cleaves and resolves the cruciform DNA. This Endomicrobium trichonymphae protein is Crossover junction endodeoxyribonuclease RuvC.